The following is a 148-amino-acid chain: MILGIGTDLANIERIERTLDRFGDRFRNRVFTEIEQRKAERRSDTAGTYAKRWAAKEACSKALGTGLRMGISWKDMAVSNLRSGQPVMQVTGWAAERLREMTPEGYEAIIHVTLTDDHPWAQAFVVIEARPLAEVGEVNLTYPAPPRM.

Mg(2+) is bound by residues Asp8 and Glu57.

This sequence belongs to the P-Pant transferase superfamily. AcpS family. Mg(2+) serves as cofactor.

Its subcellular location is the cytoplasm. It catalyses the reaction apo-[ACP] + CoA = holo-[ACP] + adenosine 3',5'-bisphosphate + H(+). In terms of biological role, transfers the 4'-phosphopantetheine moiety from coenzyme A to a Ser of acyl-carrier-protein. The protein is Holo-[acyl-carrier-protein] synthase of Ruegeria pomeroyi (strain ATCC 700808 / DSM 15171 / DSS-3) (Silicibacter pomeroyi).